A 102-amino-acid chain; its full sequence is Thioredoxin (102 aa).

The region spanning 2–102 (LHIDELTFEN…ILIHTINKYL (101 aa)) is the Thioredoxin domain. Residues C29 and C32 each act as nucleophile in the active site. A disulfide bridge links C29 with C32.

The protein belongs to the thioredoxin family.

Its subcellular location is the plastid. The protein localises to the chloroplast. Its function is as follows. Participates in various redox reactions through the reversible oxidation of its active center dithiol to a disulfide and catalyzes dithiol-disulfide exchange reactions. The protein is Thioredoxin (trxA) of Cyanidioschyzon merolae (strain NIES-3377 / 10D) (Unicellular red alga).